The primary structure comprises 267 residues: Putative carbamate hydrolase RutD (267 aa).

Residues 14-115 enclose the AB hydrolase-1 domain; it reads PVMVMISGLG…SALVIINGWL (102 aa).

It belongs to the AB hydrolase superfamily. Hydrolase RutD family.

The enzyme catalyses carbamate + 2 H(+) = NH4(+) + CO2. Involved in pyrimidine catabolism. May facilitate the hydrolysis of carbamate, a reaction that can also occur spontaneously. In Cronobacter turicensis (strain DSM 18703 / CCUG 55852 / LMG 23827 / z3032), this protein is Putative carbamate hydrolase RutD.